A 90-amino-acid chain; its full sequence is Probable Fe(2+)-trafficking protein (90 aa).

Belongs to the Fe(2+)-trafficking protein family.

Its function is as follows. Could be a mediator in iron transactions between iron acquisition and iron-requiring processes, such as synthesis and/or repair of Fe-S clusters in biosynthetic enzymes. This is Probable Fe(2+)-trafficking protein from Halorhodospira halophila (strain DSM 244 / SL1) (Ectothiorhodospira halophila (strain DSM 244 / SL1)).